Reading from the N-terminus, the 226-residue chain is MVLKAIVIDIDGTITNPDRSLDLDVAKRFRELNVPVILSTGNPLCYVHAAAKLIGISGIVIAENGGVISTGFDSPSIIADGKEECEKAYELLSQYHDLVKLDDAYRKTEVVLNRDVAVEDLRSTLSENGIDIEIIDTGYAIHIKSTAMNKGTGLLKVAELMGLEPTDYLAIGDSCNDAEMMQVAGFGIAVANADSDAIKAARHITKASFGKGALEAIEYALSNGLL.

Asp-9 (nucleophile) is an active-site residue. 2 residues coordinate Mg(2+): Asp-9 and Asp-11. A substrate-binding site is contributed by Lys-150. The Mg(2+) site is built by Asp-173 and Asp-177.

It belongs to the archaeal SPP-like hydrolase family. Mg(2+) serves as cofactor.

It catalyses the reaction 2-phosphoglycolate + H2O = glycolate + phosphate. Functionally, catalyzes the dephosphorylation of 2-phosphoglycolate. This is Phosphoglycolate phosphatase from Methanococcoides burtonii (strain DSM 6242 / NBRC 107633 / OCM 468 / ACE-M).